Consider the following 1104-residue polypeptide: Transposon Ty4-P Gag-Pol polyprotein (1104 aa).

Residues 48–112 are a coiled coil; the sequence is VKQYQRNLNR…VEKIQLLETN (65 aa). The ty4 protease stretch occupies residues 381 to 501; sequence QQQLKSSAKE…KTKMVLSRKY (121 aa). The active-site For protease activity; shared with dimeric partner is aspartate 414. An integrase-type zinc finger-like region spans residues 539–599; that stretch reads AIKPTSSPGF…EPNEFWCQTC (61 aa). The Integrase catalytic domain occupies 619–786; sequence TDHEPGSSWC…LPLKAISRQP (168 aa). Positions 630 and 695 each coordinate Mg(2+).

In terms of assembly, the protease is a homodimer, whose active site consists of two apposed aspartic acid residues. In terms of processing, proteolytically processed into capsid protein (CA), Ty4 protease (PR), integrase (IN) and reverse transcriptase/ribonuclease H (RT) proteins. Initially, virus-like particles (VLPs) are composed of the structural unprocessed proteins Gag and Gag-Pol, and also contain the host initiator methionine tRNA (tRNA(i)-Met) which serves as a primer for minus-strand DNA synthesis, and a dimer of genomic Ty RNA. Processing of the polyproteins occurs within the particle and proceeds by an ordered pathway, called maturation. First, the protease (PR) is released by autocatalytic cleavage of the Gag-Pol polyprotein, and this cleavage is a prerequisite for subsequent processing at the remaining sites to release the mature structural and catalytic proteins. Maturation takes place prior to the RT reaction and is required to produce transposition-competent VLPs.

It is found in the cytoplasm. It localises to the nucleus. It carries out the reaction DNA(n) + a 2'-deoxyribonucleoside 5'-triphosphate = DNA(n+1) + diphosphate. The catalysed reaction is Endonucleolytic cleavage to 5'-phosphomonoester.. In terms of biological role, capsid protein (CA) is the structural component of the virus-like particle (VLP), forming the shell that encapsulates the retrotransposons dimeric RNA genome. Its function is as follows. The aspartyl protease (PR) mediates the proteolytic cleavages of the Gag and Gag-Pol polyproteins after assembly of the VLP. Reverse transcriptase/ribonuclease H (RT) is a multifunctional enzyme that catalyzes the conversion of the retro-elements RNA genome into dsDNA within the VLP. The enzyme displays a DNA polymerase activity that can copy either DNA or RNA templates, and a ribonuclease H (RNase H) activity that cleaves the RNA strand of RNA-DNA heteroduplexes during plus-strand synthesis and hydrolyzes RNA primers. The conversion leads to a linear dsDNA copy of the retrotransposon that includes long terminal repeats (LTRs) at both ends. Functionally, integrase (IN) targets the VLP to the nucleus, where a subparticle preintegration complex (PIC) containing at least integrase and the newly synthesized dsDNA copy of the retrotransposon must transit the nuclear membrane. Once in the nucleus, integrase performs the integration of the dsDNA into the host genome. The chain is Transposon Ty4-P Gag-Pol polyprotein (TY4B-P) from Saccharomyces cerevisiae (strain ATCC 204508 / S288c) (Baker's yeast).